The sequence spans 91 residues: Teretoxin Tan6.2 (91 aa).

A signal peptide spans 1–21 (MATSGRLLCVCLVLGLVFGSL). Positions 22-50 (GYPVMEKKRAGKNFDLGTIANWAWQIGEK) are excised as a propeptide.

Belongs to the teretoxin M (TM) superfamily. In terms of processing, contains 3 disulfide bonds. In terms of tissue distribution, expressed by the venom duct.

The protein localises to the secreted. This Terebra anilis (Auger snail) protein is Teretoxin Tan6.2.